The primary structure comprises 59 residues: Gallinacin-14 (59 aa).

Positions 1 to 18 (MGIFLLFLVLLAVPQAAP) are cleaved as a signal peptide. Intrachain disulfides connect C25-C54, C32-C47, and C37-C55.

The protein belongs to the beta-defensin family.

The protein resides in the secreted. It is found in the cytoplasmic granule. Functionally, has bactericidal activity. In Gallus gallus (Chicken), this protein is Gallinacin-14 (GAL14).